A 108-amino-acid chain; its full sequence is UPF0102 protein Sbal_4100 (108 aa).

The protein belongs to the UPF0102 family.

The protein is UPF0102 protein Sbal_4100 of Shewanella baltica (strain OS155 / ATCC BAA-1091).